Here is a 163-residue protein sequence, read N- to C-terminus: Protein YtsP (163 aa).

This sequence belongs to the free Met sulfoxide reductase family.

The sequence is that of Protein YtsP (ytsP) from Bacillus subtilis (strain 168).